We begin with the raw amino-acid sequence, 278 residues long: 3-methyl-2-oxobutanoate hydroxymethyltransferase (278 aa).

Positions 52 and 91 each coordinate Mg(2+). 3-methyl-2-oxobutanoate contacts are provided by residues 52-53 (DS), Asp-91, and Lys-121. Glu-123 is a binding site for Mg(2+). The Proton acceptor role is filled by Glu-190.

Belongs to the PanB family. In terms of assembly, homodecamer; pentamer of dimers. It depends on Mg(2+) as a cofactor.

It localises to the cytoplasm. It catalyses the reaction 3-methyl-2-oxobutanoate + (6R)-5,10-methylene-5,6,7,8-tetrahydrofolate + H2O = 2-dehydropantoate + (6S)-5,6,7,8-tetrahydrofolate. Its pathway is cofactor biosynthesis; (R)-pantothenate biosynthesis; (R)-pantoate from 3-methyl-2-oxobutanoate: step 1/2. Its function is as follows. Catalyzes the reversible reaction in which hydroxymethyl group from 5,10-methylenetetrahydrofolate is transferred onto alpha-ketoisovalerate to form ketopantoate. The chain is 3-methyl-2-oxobutanoate hydroxymethyltransferase from Rhodospirillum rubrum (strain ATCC 11170 / ATH 1.1.1 / DSM 467 / LMG 4362 / NCIMB 8255 / S1).